Reading from the N-terminus, the 522-residue chain is Zinc finger protein 892 (522 aa).

Disordered regions lie at residues 1 to 22 (MEPE…GNPK) and 96 to 124 (AASQ…ESAP). The segment covering 100–116 (KHWETIPESKELTPEKD) has biased composition (basic and acidic residues). 10 C2H2-type zinc fingers span residues 221 to 243 (WKCN…QRIH), 249 to 271 (YECN…QRIH), 277 to 299 (YECH…HIIH), 305 to 327 (YECN…QRIH), 333 to 355 (YECN…QVIH), 361 to 383 (YKCN…QRTH), 389 to 411 (YECN…QRTH), 417 to 439 (YKCN…QRTH), 445 to 467 (YKCK…QKTH), and 473 to 495 (YKCK…QKTH).

It belongs to the krueppel C2H2-type zinc-finger protein family.

The protein localises to the nucleus. May be involved in transcriptional regulation. This is Zinc finger protein 892 from Homo sapiens (Human).